The following is a 160-amino-acid chain: 2-C-methyl-D-erythritol 2,4-cyclodiphosphate synthase (160 aa).

Asp-9 and His-11 together coordinate a divalent metal cation. 4-CDP-2-C-methyl-D-erythritol 2-phosphate is bound by residues 9–11 (DVH) and 35–36 (HS). His-43 lines the a divalent metal cation pocket. 4-CDP-2-C-methyl-D-erythritol 2-phosphate contacts are provided by residues 57–59 (DIG), 62–66 (FPDND), and Phe-140.

This sequence belongs to the IspF family. In terms of assembly, homotrimer. A divalent metal cation is required as a cofactor.

It catalyses the reaction 4-CDP-2-C-methyl-D-erythritol 2-phosphate = 2-C-methyl-D-erythritol 2,4-cyclic diphosphate + CMP. The protein operates within isoprenoid biosynthesis; isopentenyl diphosphate biosynthesis via DXP pathway; isopentenyl diphosphate from 1-deoxy-D-xylulose 5-phosphate: step 4/6. Involved in the biosynthesis of isopentenyl diphosphate (IPP) and dimethylallyl diphosphate (DMAPP), two major building blocks of isoprenoid compounds. Catalyzes the conversion of 4-diphosphocytidyl-2-C-methyl-D-erythritol 2-phosphate (CDP-ME2P) to 2-C-methyl-D-erythritol 2,4-cyclodiphosphate (ME-CPP) with a corresponding release of cytidine 5-monophosphate (CMP). The sequence is that of 2-C-methyl-D-erythritol 2,4-cyclodiphosphate synthase from Fusobacterium nucleatum subsp. nucleatum (strain ATCC 25586 / DSM 15643 / BCRC 10681 / CIP 101130 / JCM 8532 / KCTC 2640 / LMG 13131 / VPI 4355).